Consider the following 74-residue polypeptide: Guanine nucleotide-binding protein G(T) subunit gamma-T1 (74 aa).

At C71 the chain carries Cysteine methyl ester. C71 carries S-farnesyl cysteine lipidation. Residues 72-74 (VIS) constitute a propeptide, removed in mature form.

This sequence belongs to the G protein gamma family. G proteins are composed of 3 units, alpha, beta and gamma. In terms of tissue distribution, retinal rod outer segment.

Its subcellular location is the cell membrane. Its function is as follows. Guanine nucleotide-binding proteins (G proteins) are involved as a modulator or transducer in various transmembrane signaling systems. The beta and gamma chains are required for the GTPase activity, for replacement of GDP by GTP, and for G protein-effector interaction. The protein is Guanine nucleotide-binding protein G(T) subunit gamma-T1 (GNGT1) of Bos taurus (Bovine).